A 124-amino-acid chain; its full sequence is Fluoride-specific ion channel FluC (124 aa).

Transmembrane regions (helical) follow at residues 4 to 24, 35 to 55, 62 to 82, and 95 to 115; these read LLFV…MSII, FGTL…YALG, PELK…FSTF, and WFKS…MVYL. The Na(+) site is built by Gly74 and Thr77.

This sequence belongs to the fluoride channel Fluc/FEX (TC 1.A.43) family.

Its subcellular location is the cell inner membrane. It catalyses the reaction fluoride(in) = fluoride(out). Its activity is regulated as follows. Na(+) is not transported, but it plays an essential structural role and its presence is essential for fluoride channel function. In terms of biological role, fluoride-specific ion channel. Important for reducing fluoride concentration in the cell, thus reducing its toxicity. In Shewanella denitrificans (strain OS217 / ATCC BAA-1090 / DSM 15013), this protein is Fluoride-specific ion channel FluC.